The chain runs to 178 residues: Endothelin-2 (178 aa).

The signal sequence occupies residues 1–26 (MVAMPTAWCSIALALLLALHEGKGQV). Residues 27-46 (AAAPDQPAPSHRARASHLRP) constitute a propeptide that is removed on maturation. Intrachain disulfides connect cysteine 49-cysteine 63 and cysteine 51-cysteine 59. The propeptide occupies 70–178 (VNTPGQTAPY…RPTHSRRWKR (109 aa)). The interval 96-111 (CECSSGRDPACATFCH) is endothelin-like.

It belongs to the endothelin/sarafotoxin family.

The protein resides in the secreted. Functionally, endothelins are endothelium-derived vasoconstrictor peptides. The protein is Endothelin-2 (EDN2) of Felis catus (Cat).